Here is a 350-residue protein sequence, read N- to C-terminus: Geranylgeranyl diphosphate synthase (350 aa).

3 residues coordinate isopentenyl diphosphate: Lys-70, Arg-73, and His-102. Residues Asp-109 and Asp-113 each contribute to the Mg(2+) site. Positions 109-113 match the DDXXD motif motif; that stretch reads DDVMD. Arg-119 serves as a coordination point for isopentenyl diphosphate. Positions 240–244 match the DDXXD motif motif; it reads DDLIG.

The protein belongs to the FPP/GGPP synthase family. It depends on Mg(2+) as a cofactor.

It catalyses the reaction isopentenyl diphosphate + (2E,6E)-farnesyl diphosphate = (2E,6E,10E)-geranylgeranyl diphosphate + diphosphate. It functions in the pathway isoprenoid biosynthesis; geranylgeranyl diphosphate biosynthesis; geranylgeranyl diphosphate from farnesyl diphosphate and isopentenyl diphosphate: step 1/1. Catalyzes the condensation of isopentenyl pyrophosphate (IPP) with (2E,6E)-farnesyl diphosphate (E,E-FPP) to yield geranylgeranyl diphosphate (GGPP). The protein is Geranylgeranyl diphosphate synthase of Mycobacterium tuberculosis (strain ATCC 25618 / H37Rv).